A 232-amino-acid chain; its full sequence is Ribose-5-phosphate isomerase A (232 aa).

Substrate is bound by residues 29-32 (SGST), 86-89 (DGAD), and 99-102 (KGGG). Residue E108 is the Proton acceptor of the active site. K126 contributes to the substrate binding site.

This sequence belongs to the ribose 5-phosphate isomerase family. As to quaternary structure, homodimer.

It carries out the reaction aldehydo-D-ribose 5-phosphate = D-ribulose 5-phosphate. Its pathway is carbohydrate degradation; pentose phosphate pathway; D-ribose 5-phosphate from D-ribulose 5-phosphate (non-oxidative stage): step 1/1. Its function is as follows. Catalyzes the reversible conversion of ribose-5-phosphate to ribulose 5-phosphate. In Synechococcus sp. (strain ATCC 27144 / PCC 6301 / SAUG 1402/1) (Anacystis nidulans), this protein is Ribose-5-phosphate isomerase A.